Reading from the N-terminus, the 178-residue chain is UPF0232 protein cgR_0005 (178 aa).

Residues 16–55 are disordered; that stretch reads AMRRNGSVPDLNKNDAFRRPPAPKGGVEKRKKGRASGLDG.

The protein belongs to the UPF0232 family.

The chain is UPF0232 protein cgR_0005 from Corynebacterium glutamicum (strain R).